A 184-amino-acid chain; its full sequence is ATP synthase subunit b, chloroplastic (184 aa).

The chain crosses the membrane as a helical span at residues 29-49; it reads INIINLGIVIGLLVYLGEGVL.

Belongs to the ATPase B chain family. In terms of assembly, F-type ATPases have 2 components, F(1) - the catalytic core - and F(0) - the membrane proton channel. F(1) has five subunits: alpha(3), beta(3), gamma(1), delta(1), epsilon(1). F(0) has four main subunits: a(1), b(1), b'(1) and c(10-14). The alpha and beta chains form an alternating ring which encloses part of the gamma chain. F(1) is attached to F(0) by a central stalk formed by the gamma and epsilon chains, while a peripheral stalk is formed by the delta, b and b' chains.

It is found in the plastid. The protein localises to the chloroplast thylakoid membrane. F(1)F(0) ATP synthase produces ATP from ADP in the presence of a proton or sodium gradient. F-type ATPases consist of two structural domains, F(1) containing the extramembraneous catalytic core and F(0) containing the membrane proton channel, linked together by a central stalk and a peripheral stalk. During catalysis, ATP synthesis in the catalytic domain of F(1) is coupled via a rotary mechanism of the central stalk subunits to proton translocation. Functionally, component of the F(0) channel, it forms part of the peripheral stalk, linking F(1) to F(0). This Psilotum nudum (Whisk fern) protein is ATP synthase subunit b, chloroplastic.